The sequence spans 460 residues: V-type ATP synthase beta chain (460 aa).

Belongs to the ATPase alpha/beta chains family.

Functionally, produces ATP from ADP in the presence of a proton gradient across the membrane. The V-type beta chain is a regulatory subunit. This is V-type ATP synthase beta chain from Acetivibrio thermocellus (strain ATCC 27405 / DSM 1237 / JCM 9322 / NBRC 103400 / NCIMB 10682 / NRRL B-4536 / VPI 7372) (Clostridium thermocellum).